Consider the following 62-residue polypeptide: Calmodulin regulator protein PCP4 (62 aa).

Residues 1 to 39 form a disordered region; the sequence is MSERQSAGATNGKDKTSGDNDGQKKVQEEFDIDMDAPET. The span at 12-28 shows a compositional bias: basic and acidic residues; sequence GKDKTSGDNDGQKKVQE. The tract at residues 28–40 is acidic; binds calcium and is required for modulating the calcium-binding kinetics of calmodulin; that stretch reads EEFDIDMDAPETE. The IQ domain occupies 39–62; the sequence is TERAAVAIQSQFRKFQKKKAGSQS.

Belongs to the PCP4 family. As to quaternary structure, binds to both calcium-free and calcium-bound calmodulin. The affinity for the calcium-bound form is 50-fold greater.

Its function is as follows. Functions as a modulator of calcium-binding by calmodulin. Thereby, regulates calmodulin activity and the different processes it controls. For instance, may play a role in neuronal differentiation through activation of calmodulin-dependent kinase signaling pathways. The sequence is that of Calmodulin regulator protein PCP4 from Mus musculus (Mouse).